Reading from the N-terminus, the 237-residue chain is 6-carboxyhexanoate--CoA ligase (237 aa).

Belongs to the BioW family. In terms of assembly, homodimer. Mg(2+) is required as a cofactor.

It carries out the reaction heptanedioate + ATP + CoA = 6-carboxyhexanoyl-CoA + AMP + diphosphate. It participates in metabolic intermediate metabolism; pimeloyl-CoA biosynthesis; pimeloyl-CoA from pimelate: step 1/1. Catalyzes the transformation of pimelate into pimeloyl-CoA with concomitant hydrolysis of ATP to AMP. This chain is 6-carboxyhexanoate--CoA ligase, found in Methanocaldococcus jannaschii (strain ATCC 43067 / DSM 2661 / JAL-1 / JCM 10045 / NBRC 100440) (Methanococcus jannaschii).